Consider the following 579-residue polypeptide: Arginine--tRNA ligase (579 aa).

A 'HIGH' region motif is present at residues 127 to 137 (PNLAKEMHVGH).

It belongs to the class-I aminoacyl-tRNA synthetase family. As to quaternary structure, monomer.

It is found in the cytoplasm. The catalysed reaction is tRNA(Arg) + L-arginine + ATP = L-arginyl-tRNA(Arg) + AMP + diphosphate. This is Arginine--tRNA ligase from Azotobacter vinelandii (strain DJ / ATCC BAA-1303).